Consider the following 260-residue polypeptide: D-threitol dehydrogenase (260 aa).

21-50 (LVTGAASGIGAAIASAYATKGARIAAVDLN) serves as a coordination point for NAD(+). Tyr-166 serves as the catalytic Proton acceptor. An NAD(+)-binding site is contributed by Lys-170.

This sequence belongs to the short-chain dehydrogenases/reductases (SDR) family.

It carries out the reaction D-threitol + NAD(+) = D-erythrulose + NADH + H(+). It participates in carbohydrate metabolism; D-threitol degradation. In terms of biological role, catalyzes the NAD-dependent reversible oxidation of D-threitol. Involved in the degradation pathway of D-threitol, that allows M.smegmatis to grow on this compound as the sole carbon source. Does not catalyze the oxidation of xylitol, L-sorbitol, and L-sorbose. In Mycolicibacterium smegmatis (strain ATCC 700084 / mc(2)155) (Mycobacterium smegmatis), this protein is D-threitol dehydrogenase.